A 264-amino-acid polypeptide reads, in one-letter code: tRNA pseudouridine synthase A (264 aa).

The active-site Nucleophile is aspartate 51. Residue tyrosine 109 coordinates substrate.

It belongs to the tRNA pseudouridine synthase TruA family. Homodimer.

The enzyme catalyses uridine(38/39/40) in tRNA = pseudouridine(38/39/40) in tRNA. Formation of pseudouridine at positions 38, 39 and 40 in the anticodon stem and loop of transfer RNAs. The protein is tRNA pseudouridine synthase A of Pasteurella multocida (strain Pm70).